Reading from the N-terminus, the 1208-residue chain is Neural cell adhesion molecule L1-like protein (1208 aa).

Positions 1–24 (MEPLLLGRGLIVYLMFLLLKFSKA) are cleaved as a signal peptide. Over 25-1082 (IEIPSSVQQV…LYDDISTQGW (1058 aa)) the chain is Extracellular. 2 consecutive Ig-like C2-type domains span residues 35–124 (PTII…EEIE) and 128–223 (PSVP…MKLT). Cystine bridges form between C57–C109 and C153–C204. 2 N-linked (GlcNAc...) asparagine glycosylation sites follow: K231 and N299. Ig-like C2-type domains lie at 235–328 (PKLL…VIVE), 331–417 (PRWT…ANID), 423–510 (PLIQ…ANLD), and 515–607 (TKLR…TQVT). Disulfide bonds link C262-C310, C352-C401, C445-C494, and C536-C591. N-linked (GlcNAc...) asparagine glycosylation is found at N476 and N482. The DGEA motif lies at 555 to 558 (DGEA). Residues N562 and N580 are each glycosylated (N-linked (GlcNAc...) asparagine). Fibronectin type-III domains follow at residues 614-709 (PPEN…TPPA), 714-807 (NPQN…SGED), 809-914 (PDTA…TPEG), and 918-1015 (QPTF…LGEG). The tract at residues 693-716 (GRSQPSQPSDHHETPPAAPDRNPQ) is disordered. Residues N767, N822, N945, and N1026 are each glycosylated (N-linked (GlcNAc...) asparagine). Residues 1083 to 1103 (FIGLMCAIALLTLLLLTVCFV) form a helical membrane-spanning segment. The Cytoplasmic portion of the chain corresponds to 1104 to 1208 (KRNRGGKYSV…SSTATFPLRA (105 aa)). The interval 1131–1163 (ETFGEYSDSDEKPLKGSLRSLNRDMQPTESADS) is disordered. Residues S1147, S1160, and S1180 each carry the phosphoserine modification. The segment covering 1149-1161 (RSLNRDMQPTESA) has biased composition (polar residues). Positions 1181–1185 (FIGAY) match the FIG[AQ]Y motif. Residues 1189-1208 (KEKGSVESNGSSTATFPLRA) form a disordered region. The segment covering 1194-1208 (VESNGSSTATFPLRA) has biased composition (polar residues).

Belongs to the immunoglobulin superfamily. L1/neurofascin/NgCAM family. As to quaternary structure, may interact with L1CAM. May interact with ITGB1/ITGA1 heterodimer and ITGB1/ITGA2 heterodimer as well as with ANK3. In terms of processing, cleavage by metalloprotease ADAM8 in the extracellular part generates 2 soluble forms (125 kDa and 165 kDa) in vitro and is inhibited by metalloprotease inhibitors. Cleaved by BACE1. N-glycosylated. Contains N-linked oligosaccharides with a sulfated carbohydrate structure type HNK-1 (SO4-3-GlcUABeta1,3GalBeta1,4GlcNAc). Post-translationally, O-glycosylated. As to expression, expressed in the fetal and adult brain as well as in Schwann cell culture. Also detected in adult peripheral tissues.

Its subcellular location is the cell membrane. The protein resides in the secreted. It localises to the extracellular space. The protein localises to the extracellular matrix. Extracellular matrix and cell adhesion protein that plays a role in nervous system development and in synaptic plasticity. Both soluble and membranous forms promote neurite outgrowth of cerebellar and hippocampal neurons and suppress neuronal cell death. Plays a role in neuronal positioning of pyramidal neurons and in regulation of both the number of interneurons and the efficacy of GABAergic synapses. May play a role in regulating cell migration in nerve regeneration and cortical development. Potentiates integrin-dependent cell migration towards extracellular matrix proteins. Recruits ANK3 to the plasma membrane. This Homo sapiens (Human) protein is Neural cell adhesion molecule L1-like protein (CHL1).